The chain runs to 144 residues: UPF0179 protein PF1381 (144 aa).

It belongs to the UPF0179 family.

The chain is UPF0179 protein PF1381 from Pyrococcus furiosus (strain ATCC 43587 / DSM 3638 / JCM 8422 / Vc1).